Consider the following 382-residue polypeptide: Small ribosomal subunit protein bS1 homolog (382 aa).

S1 motif domains are found at residues 16 to 84 (GDVV…LSKR), 102 to 167 (KEVF…LSHR), 188 to 256 (GSVL…LSIK), and 273 to 342 (GDVL…LSMR). S243 bears the Phosphoserine mark.

The protein belongs to the bacterial ribosomal protein bS1 family.

Functionally, plays a role in sporulation. Cannot be expressed in wild-type E.coli, does not complement an E.coli rpsA deletion. This chain is Small ribosomal subunit protein bS1 homolog, found in Bacillus subtilis (strain 168).